The chain runs to 518 residues: Protein nucleotidyltransferase YdiU (518 aa).

Positions 1–22 (MTHLQFDNRLRAELPGDPEEGP) are disordered. G100, G102, R103, K123, D135, G136, R193, and R200 together coordinate ATP. The active-site Proton acceptor is the D270. N271 and D280 together coordinate Mg(2+). D280 contacts ATP.

The protein belongs to the SELO family. The cofactor is Mg(2+). Requires Mn(2+) as cofactor.

The catalysed reaction is L-seryl-[protein] + ATP = 3-O-(5'-adenylyl)-L-seryl-[protein] + diphosphate. The enzyme catalyses L-threonyl-[protein] + ATP = 3-O-(5'-adenylyl)-L-threonyl-[protein] + diphosphate. It catalyses the reaction L-tyrosyl-[protein] + ATP = O-(5'-adenylyl)-L-tyrosyl-[protein] + diphosphate. It carries out the reaction L-histidyl-[protein] + UTP = N(tele)-(5'-uridylyl)-L-histidyl-[protein] + diphosphate. The catalysed reaction is L-seryl-[protein] + UTP = O-(5'-uridylyl)-L-seryl-[protein] + diphosphate. The enzyme catalyses L-tyrosyl-[protein] + UTP = O-(5'-uridylyl)-L-tyrosyl-[protein] + diphosphate. In terms of biological role, nucleotidyltransferase involved in the post-translational modification of proteins. It can catalyze the addition of adenosine monophosphate (AMP) or uridine monophosphate (UMP) to a protein, resulting in modifications known as AMPylation and UMPylation. The protein is Protein nucleotidyltransferase YdiU of Xanthomonas campestris pv. campestris (strain 8004).